The chain runs to 394 residues: Phosphoglycerate kinase (394 aa).

Substrate is bound by residues 21-23 (DLN), 59-62 (HLGR), arginine 117, and arginine 150. ATP-binding positions include lysine 201, glutamate 318, and 344-347 (GGDT).

The protein belongs to the phosphoglycerate kinase family. Monomer.

It localises to the cytoplasm. It catalyses the reaction (2R)-3-phosphoglycerate + ATP = (2R)-3-phospho-glyceroyl phosphate + ADP. Its pathway is carbohydrate degradation; glycolysis; pyruvate from D-glyceraldehyde 3-phosphate: step 2/5. The sequence is that of Phosphoglycerate kinase from Blochmanniella pennsylvanica (strain BPEN).